Here is a 527-residue protein sequence, read N- to C-terminus: Putative BTB/POZ domain-containing protein R225 (527 aa).

Positions 16–89 (TDLELVLTDP…YGQTNRSTDY (74 aa)) constitute a BTB domain.

The protein belongs to the mimivirus BTB/WD family.

The sequence is that of Putative BTB/POZ domain-containing protein R225 from Acanthamoeba polyphaga (Amoeba).